Reading from the N-terminus, the 168-residue chain is uncharacterized protein (168 aa).

Over residues 1–15 (MKRIISSSKSLKQLS) the composition is skewed to low complexity. The disordered stretch occupies residues 1–107 (MKRIISSSKS…NNNNNNNNNN (107 aa)). A compositionally biased stretch (acidic residues) spans 33–47 (SDSDSDSDSDSDSDS). Low complexity predominate over residues 48-107 (DSNSNSNSNSNSNSNSNSNSNSNSNSNNNNNNTNNNNNNNNNNNNNNNNNNNNNNNNNNN).

This is an uncharacterized protein from Dictyostelium discoideum (Social amoeba).